A 518-amino-acid polypeptide reads, in one-letter code: Glutamate--cysteine ligase (518 aa).

Belongs to the glutamate--cysteine ligase type 1 family. Type 1 subfamily.

It catalyses the reaction L-cysteine + L-glutamate + ATP = gamma-L-glutamyl-L-cysteine + ADP + phosphate + H(+). The protein operates within sulfur metabolism; glutathione biosynthesis; glutathione from L-cysteine and L-glutamate: step 1/2. The protein is Glutamate--cysteine ligase of Salmonella paratyphi C (strain RKS4594).